The primary structure comprises 89 residues: MALDQQAKAKIRAEYATVEGDTGSPEVQVAVLTKRIADLTEHLKVHKHDHHSRRGLLLLVGRRRRLLNYVQKRDINRYRSLIERLGLRR.

Belongs to the universal ribosomal protein uS15 family. In terms of assembly, part of the 30S ribosomal subunit. Forms a bridge to the 50S subunit in the 70S ribosome, contacting the 23S rRNA.

Functionally, one of the primary rRNA binding proteins, it binds directly to 16S rRNA where it helps nucleate assembly of the platform of the 30S subunit by binding and bridging several RNA helices of the 16S rRNA. Forms an intersubunit bridge (bridge B4) with the 23S rRNA of the 50S subunit in the ribosome. This chain is Small ribosomal subunit protein uS15, found in Salinispora arenicola (strain CNS-205).